The sequence spans 80 residues: Serine protease inhibitor Kazal-type 6 (80 aa).

Residues 1–23 (MKLSGMFLLLSLALFCFLTGVFS) form the signal peptide. Gln24 bears the Pyrrolidone carboxylic acid mark. A Kazal-like domain is found at 24–80 (QGGQVDCGEFQDPKVYCTRESNPHCGSDGQTYGNKCAFCKAIVKSGGKISLKHPGKC). Intrachain disulfides connect Cys30/Cys62, Cys40/Cys59, and Cys48/Cys80.

The protein resides in the secreted. Its function is as follows. Serine protease inhibitor selective for kallikreins. Efficiently inhibits KLK4, KLK5, KLK6, KLK7, KLK12, KLK13 and KLK14. Doesn't inhibit KLK8. This chain is Serine protease inhibitor Kazal-type 6 (SPINK6), found in Homo sapiens (Human).